Reading from the N-terminus, the 410-residue chain is Translation initiation factor 2 subunit gamma (410 aa).

Residues 6 to 203 (QSEVNIGMVG…AIQDFIPTPE (198 aa)) form the tr-type G domain. Residues 15–22 (GHVDHGKT) are G1. Mg(2+) contacts are provided by aspartate 18, threonine 22, glycine 43, and serine 45. A GTP-binding site is contributed by 18 to 23 (DHGKTS). The segment at 43–47 (GISIR) is G2. The Zn(2+) site is built by cysteine 58, cysteine 61, cysteine 73, and cysteine 76. Positions 90 to 93 (DAPG) are G3. GTP contacts are provided by residues 146–149 (NKID) and 181–183 (SAH). The segment at 146–149 (NKID) is G4. The tract at residues 181-183 (SAH) is G5.

It belongs to the TRAFAC class translation factor GTPase superfamily. Classic translation factor GTPase family. EIF2G subfamily. Heterotrimer composed of an alpha, a beta and a gamma chain. Requires Mg(2+) as cofactor.

The enzyme catalyses GTP + H2O = GDP + phosphate + H(+). Its function is as follows. eIF-2 functions in the early steps of protein synthesis by forming a ternary complex with GTP and initiator tRNA. The protein is Translation initiation factor 2 subunit gamma of Methanococcus maripaludis (strain DSM 14266 / JCM 13030 / NBRC 101832 / S2 / LL).